The sequence spans 344 residues: tRNA N6-adenosine threonylcarbamoyltransferase (344 aa).

Residues histidine 119 and histidine 123 each coordinate Fe cation. Substrate-binding positions include 141–145, aspartate 174, glycine 187, aspartate 191, and asparagine 280; that span reads VVSGG. Aspartate 310 is a binding site for Fe cation.

Belongs to the KAE1 / TsaD family. Requires Fe(2+) as cofactor.

The protein resides in the cytoplasm. The enzyme catalyses L-threonylcarbamoyladenylate + adenosine(37) in tRNA = N(6)-L-threonylcarbamoyladenosine(37) in tRNA + AMP + H(+). Required for the formation of a threonylcarbamoyl group on adenosine at position 37 (t(6)A37) in tRNAs that read codons beginning with adenine. Is involved in the transfer of the threonylcarbamoyl moiety of threonylcarbamoyl-AMP (TC-AMP) to the N6 group of A37, together with TsaE and TsaB. TsaD likely plays a direct catalytic role in this reaction. In Listeria innocua serovar 6a (strain ATCC BAA-680 / CLIP 11262), this protein is tRNA N6-adenosine threonylcarbamoyltransferase.